The chain runs to 333 residues: Cytosolic sulfotransferase 10 (333 aa).

76-81 (KSGTTW) lines the 3'-phosphoadenylyl sulfate pocket. The active-site Proton acceptor is the H146. Residues R168, S176, Y234, and 299–301 (RKG) contribute to the 3'-phosphoadenylyl sulfate site.

It belongs to the sulfotransferase 1 family. In terms of tissue distribution, expressed in roots.

The protein localises to the cytoplasm. Sulfotransferase that utilizes 3'-phospho-5'-adenylyl sulfate (PAPS) as sulfonate donor to specifically catalyze the sulfate conjugation of brassinosteroids, including castasterone (CS), brassinolide (BL), related 24-epimers, and the naturally occurring (22R, 23R)-28-homobrassinosteroids. No activity on phenolic acids, desulfo-glucosinolates, flavonoids, steroids, gibberellic acids, cytokinins, phenylpropanoids, hydroxyjasmonates and coumarins. The polypeptide is Cytosolic sulfotransferase 10 (SOT10) (Arabidopsis thaliana (Mouse-ear cress)).